The following is a 102-amino-acid chain: Small ribosomal subunit protein uS10 (102 aa).

This sequence belongs to the universal ribosomal protein uS10 family. As to quaternary structure, part of the 30S ribosomal subunit.

Functionally, involved in the binding of tRNA to the ribosomes. The polypeptide is Small ribosomal subunit protein uS10 (Ligilactobacillus salivarius (strain UCC118) (Lactobacillus salivarius)).